Reading from the N-terminus, the 209-residue chain is Thiamine-phosphate synthase (209 aa).

4-amino-2-methyl-5-(diphosphooxymethyl)pyrimidine-binding positions include 36–40 (QYRDK) and Asn68. Asp69 and Asp87 together coordinate Mg(2+). 4-amino-2-methyl-5-(diphosphooxymethyl)pyrimidine is bound at residue Thr106. A 2-[(2R,5Z)-2-carboxy-4-methylthiazol-5(2H)-ylidene]ethyl phosphate-binding site is contributed by 133-135 (SST). Lys136 serves as a coordination point for 4-amino-2-methyl-5-(diphosphooxymethyl)pyrimidine. Gly163 contacts 2-[(2R,5Z)-2-carboxy-4-methylthiazol-5(2H)-ylidene]ethyl phosphate.

It belongs to the thiamine-phosphate synthase family. The cofactor is Mg(2+).

It catalyses the reaction 2-[(2R,5Z)-2-carboxy-4-methylthiazol-5(2H)-ylidene]ethyl phosphate + 4-amino-2-methyl-5-(diphosphooxymethyl)pyrimidine + 2 H(+) = thiamine phosphate + CO2 + diphosphate. It carries out the reaction 2-(2-carboxy-4-methylthiazol-5-yl)ethyl phosphate + 4-amino-2-methyl-5-(diphosphooxymethyl)pyrimidine + 2 H(+) = thiamine phosphate + CO2 + diphosphate. The enzyme catalyses 4-methyl-5-(2-phosphooxyethyl)-thiazole + 4-amino-2-methyl-5-(diphosphooxymethyl)pyrimidine + H(+) = thiamine phosphate + diphosphate. It functions in the pathway cofactor biosynthesis; thiamine diphosphate biosynthesis; thiamine phosphate from 4-amino-2-methyl-5-diphosphomethylpyrimidine and 4-methyl-5-(2-phosphoethyl)-thiazole: step 1/1. Its function is as follows. Condenses 4-methyl-5-(beta-hydroxyethyl)thiazole monophosphate (THZ-P) and 2-methyl-4-amino-5-hydroxymethyl pyrimidine pyrophosphate (HMP-PP) to form thiamine monophosphate (TMP). In Azotobacter vinelandii (strain DJ / ATCC BAA-1303), this protein is Thiamine-phosphate synthase.